Reading from the N-terminus, the 601-residue chain is Elongation factor 4 (601 aa).

Positions 6–188 (SHIRNFSIIA…QIVHRVPPPE (183 aa)) constitute a tr-type G domain. Residues 18–23 (DHGKST) and 135–138 (NKID) each bind GTP.

The protein belongs to the TRAFAC class translation factor GTPase superfamily. Classic translation factor GTPase family. LepA subfamily.

It is found in the cell inner membrane. The catalysed reaction is GTP + H2O = GDP + phosphate + H(+). In terms of biological role, required for accurate and efficient protein synthesis under certain stress conditions. May act as a fidelity factor of the translation reaction, by catalyzing a one-codon backward translocation of tRNAs on improperly translocated ribosomes. Back-translocation proceeds from a post-translocation (POST) complex to a pre-translocation (PRE) complex, thus giving elongation factor G a second chance to translocate the tRNAs correctly. Binds to ribosomes in a GTP-dependent manner. The chain is Elongation factor 4 from Anaeromyxobacter dehalogenans (strain 2CP-C).